A 156-amino-acid chain; its full sequence is MNFNATLIGQTVAFIIFVWFCMKFVWPPLMNAIEARQKRIADGLADADRAVKDLELAQAKATDQLKEAKVTANEIIEQANKRKAQIVEEAKTEADAERAKIIAQGKAEIEAERNRVKEDLRKQVATLAIMGAEKILERSIDPAAHSDIVNKLVAEI.

The helical transmembrane segment at 7–27 (LIGQTVAFIIFVWFCMKFVWP) threads the bilayer.

This sequence belongs to the ATPase B chain family. F-type ATPases have 2 components, F(1) - the catalytic core - and F(0) - the membrane proton channel. F(1) has five subunits: alpha(3), beta(3), gamma(1), delta(1), epsilon(1). F(0) has three main subunits: a(1), b(2) and c(10-14). The alpha and beta chains form an alternating ring which encloses part of the gamma chain. F(1) is attached to F(0) by a central stalk formed by the gamma and epsilon chains, while a peripheral stalk is formed by the delta and b chains.

The protein localises to the cell inner membrane. Its function is as follows. F(1)F(0) ATP synthase produces ATP from ADP in the presence of a proton or sodium gradient. F-type ATPases consist of two structural domains, F(1) containing the extramembraneous catalytic core and F(0) containing the membrane proton channel, linked together by a central stalk and a peripheral stalk. During catalysis, ATP synthesis in the catalytic domain of F(1) is coupled via a rotary mechanism of the central stalk subunits to proton translocation. Functionally, component of the F(0) channel, it forms part of the peripheral stalk, linking F(1) to F(0). This Shewanella oneidensis (strain ATCC 700550 / JCM 31522 / CIP 106686 / LMG 19005 / NCIMB 14063 / MR-1) protein is ATP synthase subunit b.